A 978-amino-acid polypeptide reads, in one-letter code: uncharacterized protein (978 aa).

A signal peptide spans 1–27 (MHSWKKKLVVSQLALACTLAITSQANA). Positions 713–978 (GLADNGGAWV…SANVGVKYTW (266 aa)) constitute an Autotransporter domain.

This is an uncharacterized protein from Salmonella typhimurium (strain LT2 / SGSC1412 / ATCC 700720).